The primary structure comprises 184 residues: Histone H3-like centromeric protein CSE4 (184 aa).

Residues 54–81 (YIQPERSASSQQIHPPEHHISAHERITK) form a disordered region. Over residues 68-80 (PPEHHISAHERIT) the composition is skewed to basic and acidic residues. The interval 82-182 (ARGTRYKPTD…MQLARRIRGQ (101 aa)) is H3-like.

The protein belongs to the histone H3 family. As to quaternary structure, component of centromeric nucleosomes, where DNA is wrapped around a histone octamer core. The octamer contains two molecules each of H2A, H2B, CSE4/CENPA and H4 assembled in one CSE4-H4 heterotetramer and two H2A-H2B heterodimers. Interacts with the inner kinetochore. Post-translationally, ubiquitinated. Is degraded through ubiquitin-mediated proteolysis when not protected by its association to the kinetochore.

It localises to the nucleus. Its subcellular location is the chromosome. The protein resides in the centromere. In terms of biological role, histone H3-like nucleosomal protein that is specifically found in centromeric nucleosomes. Replaces conventional H3 in the nucleosome core of centromeric chromatin that serves as an assembly site for the inner kinetochore. Required for recruitment and assembly of kinetochore proteins, mitotic progression and chromosome segregation. May serve as an epigenetic mark that propagates centromere identity through replication and cell division. The protein is Histone H3-like centromeric protein CSE4 (CSE4) of Kluyveromyces lactis (strain ATCC 8585 / CBS 2359 / DSM 70799 / NBRC 1267 / NRRL Y-1140 / WM37) (Yeast).